The following is a 292-amino-acid chain: Probable ABC transporter permease protein YurN (292 aa).

A run of 6 helical transmembrane segments spans residues 7–27, 70–90, 106–126, 160–180, 215–235, and 260–280; these read IIPYLFLVPALVFLLFVYIPI, VLYAVISIVCQVFGGLILAAV, VFFLPVVISMTVIALLFDFIY, VIFVSQWQSVGYIAMLYIVSI, FVAVVMTLTGAFTVFNEPYIL, and MMGYASAIATVVLIITLALSL. One can recognise an ABC transmembrane type-1 domain in the interval 66 to 282; sequence LTNNVLYAVI…IITLALSLMQ (217 aa).

Belongs to the binding-protein-dependent transport system permease family. MalFG subfamily.

It is found in the cell membrane. Its function is as follows. Probably part of the binding-protein-dependent transport system YurMNO. Probably responsible for the translocation of the substrate across the membrane. The chain is Probable ABC transporter permease protein YurN (yurN) from Bacillus subtilis (strain 168).